The primary structure comprises 85 residues: U4-theraphotoxin-Hhn1a (85 aa).

The first 22 residues, 1-22 (MKMTLIAILTCAAVLVLHTTAA), serve as a signal peptide directing secretion. Positions 23 to 48 (EELEAESQLMEVGMPDTELAAVDEER) are excised as a propeptide. Disulfide bonds link Cys52–Cys66, Cys56–Cys77, and Cys71–Cys82.

This sequence belongs to the neurotoxin 12 (Hwtx-2) family. 02 (Hwtx-2) subfamily. Monomer. As to expression, expressed by the venom gland.

It is found in the secreted. In terms of biological role, neurotoxin active on both insects and mammals. In Cyriopagopus hainanus (Chinese bird spider), this protein is U4-theraphotoxin-Hhn1a.